Here is a 123-residue protein sequence, read N- to C-terminus: Ribosome-binding factor A (123 aa).

Belongs to the RbfA family. As to quaternary structure, monomer. Binds 30S ribosomal subunits, but not 50S ribosomal subunits or 70S ribosomes.

It localises to the cytoplasm. Its function is as follows. One of several proteins that assist in the late maturation steps of the functional core of the 30S ribosomal subunit. Associates with free 30S ribosomal subunits (but not with 30S subunits that are part of 70S ribosomes or polysomes). Required for efficient processing of 16S rRNA. May interact with the 5'-terminal helix region of 16S rRNA. The polypeptide is Ribosome-binding factor A (Neisseria gonorrhoeae (strain ATCC 700825 / FA 1090)).